Reading from the N-terminus, the 421-residue chain is General transcription factor IIH subunit 2 (421 aa).

Residues 1-26 (MSNQRKRSNDEREEEDDEDAEGIGEW) form a disordered region. Over residues 11 to 24 (EREEEDDEDAEGIG) the composition is skewed to acidic residues. The VWFA domain maps to 83–272 (YLYIVIDFSR…IAEFAIANLI (190 aa)). An RING-type zinc finger spans residues 362-408 (CFGCQQSLIGAGNKPVPCVTCRKCKHYFCLDCDIYIHESLHNCPGCE).

It belongs to the GTF2H2 family. As to quaternary structure, component of the 7-subunit TFIIH core complex composed of XPB, XPD, TFB1/GTF2H1, GTF2H2/P44, TFB4/GTF2H3, TFB2/GTF2H4 and TFB5/GTF2H5, which is active in NER. The core complex associates with the 3-subunit CDK-activating kinase (CAK) module composed of CYCH1/cyclin H1, CDKD and MAT1/At4g30820 to form the 10-subunit holoenzyme (holo-TFIIH) active in transcription. Interacts with XPD.

It is found in the nucleus. In terms of biological role, component of the general transcription and DNA repair factor IIH (TFIIH) core complex, which is involved in general and transcription-coupled nucleotide excision repair (NER) of damaged DNA and, when complexed to CAK, in RNA transcription by RNA polymerase II. In NER, TFIIH acts by opening DNA around the lesion to allow the excision of the damaged oligonucleotide and its replacement by a new DNA fragment. In transcription, TFIIH has an essential role in transcription initiation. When the pre-initiation complex (PIC) has been established, TFIIH is required for promoter opening and promoter escape. Phosphorylation of the C-terminal tail (CTD) of the largest subunit of RNA polymerase II by the kinase module CAK controls the initiation of transcription. Can restore UV resistance in the NER-deficient ssl1-1 yeast mutant. This is General transcription factor IIH subunit 2 from Arabidopsis thaliana (Mouse-ear cress).